Consider the following 246-residue polypeptide: uncharacterized protein (246 aa).

4 consecutive transmembrane segments (helical) span residues 32–52, 69–89, 121–141, and 146–166; these read TLFF…VGFI, IIAI…MCPF, IYFK…GVKI, and LAYL…MFFC. 4Fe-4S ferredoxin-type domains are found at residues 185–213 and 210–239; these read FKLK…ITEK and ITEK…FSAF. C194, C197, C200, C204, C219, C222, C225, and C229 together coordinate [4Fe-4S] cluster.

It is found in the cell membrane. This is an uncharacterized protein from Methanocaldococcus jannaschii (strain ATCC 43067 / DSM 2661 / JAL-1 / JCM 10045 / NBRC 100440) (Methanococcus jannaschii).